The primary structure comprises 372 residues: Putative glutamate--cysteine ligase 2 (372 aa).

The protein belongs to the glutamate--cysteine ligase type 2 family. YbdK subfamily. As to quaternary structure, homodimer.

The enzyme catalyses L-cysteine + L-glutamate + ATP = gamma-L-glutamyl-L-cysteine + ADP + phosphate + H(+). ATP-dependent carboxylate-amine ligase which exhibits weak glutamate--cysteine ligase activity. The sequence is that of Putative glutamate--cysteine ligase 2 (ybdK) from Escherichia coli O17:K52:H18 (strain UMN026 / ExPEC).